The chain runs to 131 residues: Large ribosomal subunit protein bL19 (131 aa).

It belongs to the bacterial ribosomal protein bL19 family.

In terms of biological role, this protein is located at the 30S-50S ribosomal subunit interface and may play a role in the structure and function of the aminoacyl-tRNA binding site. In Rhodopseudomonas palustris (strain BisB18), this protein is Large ribosomal subunit protein bL19.